A 306-amino-acid polypeptide reads, in one-letter code: Serine/threonine-protein phosphatase PP2A-2 catalytic subunit (306 aa).

Asp54, His56, Asp82, and Asn114 together coordinate Mn(2+). Residue His115 is the Proton donor of the active site. Positions 164 and 238 each coordinate Mn(2+). A Leucine methyl ester modification is found at Leu306.

The protein belongs to the PPP phosphatase family. PP-2A subfamily. As to quaternary structure, PP2A consists of a common heterodimeric core enzyme, composed of a 36 kDa catalytic subunit (subunit C) and a 65 kDa constant regulatory subunit (subunit A), that associates with a variety of regulatory subunits such as subunits B (the R2/B/PR55/B55, R3/B''/PR72/PR130/PR59 and R5/B'/B56 families). Interacts with B'THETA. Interacts with HDA14. Interacts with SRK2E/OST1. Interacts with TAP46. Requires Mn(2+) as cofactor. Post-translationally, reversibly methyl esterified on Leu-306 by leucine carboxyl methyltransferase 1 (LCMT1) and pectin methylesterase 1 (PME1). Carboxyl methylation influences the affinity of the catalytic subunit for the different regulatory subunits, thereby modulating the PP2A holoenzyme's substrate specificity, enzyme activity and cellular localization. Phosphorylation of either threonine (by autophosphorylation-activated protein kinase) or tyrosine results in inactivation of the phosphatase. Auto-dephosphorylation has been suggested as a mechanism for reactivation. In terms of tissue distribution, expressed in root meristem, emerging lateral roots, leaf vasculature, stipules, guard cells, anthers and pollen grains.

The protein resides in the cytoplasm. The protein localises to the cytosol. It is found in the nucleus. It localises to the peroxisome. The catalysed reaction is O-phospho-L-seryl-[protein] + H2O = L-seryl-[protein] + phosphate. It carries out the reaction O-phospho-L-threonyl-[protein] + H2O = L-threonyl-[protein] + phosphate. Its function is as follows. Dephosphorylates and activates the actin-depolymerizing factor ADF1, which, in turn, regulates actin cytoskeleton remodeling and is involved in the blue light photoreceptor PHOT2-mediated chloroplast avoidance movements. Associates with the serine/threonine-protein phosphatase PP2A regulatory subunits A and B' to positively regulates beta-oxidation of fatty acids and protoauxins in peroxisomes by dephosphorylating peroxisomal beta-oxidation-related proteins. Acts as a negative regulator of abscisic acid (ABA) signaling. May regulate ABA-dependent gene expression. Involved in the light-dependent activation of nitrate reductase. The protein is Serine/threonine-protein phosphatase PP2A-2 catalytic subunit of Arabidopsis thaliana (Mouse-ear cress).